Consider the following 300-residue polypeptide: Acetyl-coenzyme A carboxylase carboxyl transferase subunit beta 2 (300 aa).

In terms of domain architecture, CoA carboxyltransferase N-terminal spans 26–294 (VWVKCPSCRE…SGAYSSEAVA (269 aa)). Zn(2+)-binding residues include Cys30, Cys33, Cys49, and Cys51. Residues 30–51 (CPSCRELIYHKQLAERMKVCRC) form a C4-type zinc finger.

The protein belongs to the AccD/PCCB family. Acetyl-CoA carboxylase is a heterohexamer composed of biotin carboxyl carrier protein (AccB), biotin carboxylase (AccC) and two subunits each of ACCase subunit alpha (AccA) and ACCase subunit beta (AccD). The cofactor is Zn(2+).

The protein resides in the cytoplasm. It carries out the reaction N(6)-carboxybiotinyl-L-lysyl-[protein] + acetyl-CoA = N(6)-biotinyl-L-lysyl-[protein] + malonyl-CoA. The protein operates within lipid metabolism; malonyl-CoA biosynthesis; malonyl-CoA from acetyl-CoA: step 1/1. Its function is as follows. Component of the acetyl coenzyme A carboxylase (ACC) complex. Biotin carboxylase (BC) catalyzes the carboxylation of biotin on its carrier protein (BCCP) and then the CO(2) group is transferred by the transcarboxylase to acetyl-CoA to form malonyl-CoA. This Roseiflexus castenholzii (strain DSM 13941 / HLO8) protein is Acetyl-coenzyme A carboxylase carboxyl transferase subunit beta 2.